The chain runs to 1078 residues: Carbamoyl phosphate synthase large chain (1078 aa).

The segment at 1 to 401 (MARQPLVSSV…ALQKAVRGLE (401 aa)) is carboxyphosphate synthetic domain. ATP-binding residues include arginine 129, arginine 169, glycine 175, glycine 176, arginine 208, leucine 210, glutamate 215, glycine 241, valine 242, histidine 243, glutamine 284, and glutamate 298. The 195-residue stretch at 133-327 (KELLLEIGEP…IARIAAKLAI (195 aa)) folds into the ATP-grasp 1 domain. Mg(2+)-binding residues include glutamine 284, glutamate 298, and asparagine 300. 3 residues coordinate Mn(2+): glutamine 284, glutamate 298, and asparagine 300. The oligomerization domain stretch occupies residues 402–546 (TDQTDLTWED…YATYEDENEA (145 aa)). The segment at 547-935 (PPLDSPKAVV…ALAKAFLAAG (389 aa)) is carbamoyl phosphate synthetic domain. The ATP-grasp 2 domain occupies 677–867 (ERFLHELGIP…MVDVATQILL (191 aa)). 10 residues coordinate ATP: arginine 713, lysine 752, leucine 754, glutamate 758, glycine 783, valine 784, histidine 785, serine 786, glutamine 826, and glutamate 838. Mg(2+) is bound by residues glutamine 826, glutamate 838, and asparagine 840. Mn(2+) is bound by residues glutamine 826, glutamate 838, and asparagine 840. Residues 936 to 1078 (LAIERGAPVL…AYRTREAVLA (143 aa)) enclose the MGS-like domain. An allosteric domain region spans residues 936–1078 (LAIERGAPVL…AYRTREAVLA (143 aa)).

The protein belongs to the CarB family. As to quaternary structure, composed of two chains; the small (or glutamine) chain promotes the hydrolysis of glutamine to ammonia, which is used by the large (or ammonia) chain to synthesize carbamoyl phosphate. Tetramer of heterodimers (alpha,beta)4. Requires Mg(2+) as cofactor. Mn(2+) serves as cofactor.

It catalyses the reaction hydrogencarbonate + L-glutamine + 2 ATP + H2O = carbamoyl phosphate + L-glutamate + 2 ADP + phosphate + 2 H(+). It carries out the reaction hydrogencarbonate + NH4(+) + 2 ATP = carbamoyl phosphate + 2 ADP + phosphate + 2 H(+). Its pathway is amino-acid biosynthesis; L-arginine biosynthesis; carbamoyl phosphate from bicarbonate: step 1/1. It participates in pyrimidine metabolism; UMP biosynthesis via de novo pathway; (S)-dihydroorotate from bicarbonate: step 1/3. Large subunit of the glutamine-dependent carbamoyl phosphate synthetase (CPSase). CPSase catalyzes the formation of carbamoyl phosphate from the ammonia moiety of glutamine, carbonate, and phosphate donated by ATP, constituting the first step of 2 biosynthetic pathways, one leading to arginine and/or urea and the other to pyrimidine nucleotides. The large subunit (synthetase) binds the substrates ammonia (free or transferred from glutamine from the small subunit), hydrogencarbonate and ATP and carries out an ATP-coupled ligase reaction, activating hydrogencarbonate by forming carboxy phosphate which reacts with ammonia to form carbamoyl phosphate. In Thermomicrobium roseum (strain ATCC 27502 / DSM 5159 / P-2), this protein is Carbamoyl phosphate synthase large chain.